A 33-amino-acid polypeptide reads, in one-letter code: Brevinin-2GRb (33 aa).

As to expression, expressed by the skin glands.

Its subcellular location is the secreted. Antimicrobial peptide active against the Gram-positive bacterium S.aureus (MIC=25 uM) and against the Gram-negative bacteria E.coli (MIC=6 uM). Has no antifungal activity against C.albicans. Shows hemolytic activity against human erythrocytes only at high concentrations (LC(50)=180 uM). The polypeptide is Brevinin-2GRb (Odorrana grahami (Yunnanfu frog)).